The primary structure comprises 128 residues: Small ribosomal subunit protein uS9c (128 aa).

It belongs to the universal ribosomal protein uS9 family.

The protein localises to the plastid. This chain is Small ribosomal subunit protein uS9c (rps9), found in Euglena longa (Euglenophycean alga).